A 206-amino-acid polypeptide reads, in one-letter code: Ras-related protein O-RAL (206 aa).

21 to 28 (GSGGVGKS) is a GTP binding site. The Effector region signature appears at 43 to 51 (YEPTKADSY). GTP is bound by residues 68 to 72 (DTAGQ) and 128 to 131 (NKSD). Over residues 180–189 (KMSENKDKNG) the composition is skewed to basic and acidic residues. Residues 180–206 (KMSENKDKNGKKSSRNKKSLRERCCIL) are disordered. Cys203 carries the cysteine methyl ester modification. Cys203 carries the S-geranylgeranyl cysteine lipid modification. Residues 204–206 (CIL) constitute a propeptide, removed in mature form.

Belongs to the small GTPase superfamily. Ras family.

Its subcellular location is the cell membrane. The enzyme catalyses GTP + H2O = GDP + phosphate + H(+). In Diplobatis ommata (Ocellated electric ray), this protein is Ras-related protein O-RAL.